We begin with the raw amino-acid sequence, 239 residues long: IkB-like protein (239 aa).

ANK repeat units follow at residues 48–77, 87–116, 124–153, and 158–187; these read NKIT…YPGE, DGNS…KNGI, NGVT…NPNR, and KGFT…KPLF. A Nuclear localization signal motif is present at residues 81–87; the sequence is HYRRDKD. The Nuclear localization signal signature appears at 203-214; the sequence is KKKPKIIITGCE. The PxIxITxC motif; Interaction with host PPP3CA motif lies at 206–213; the sequence is PKIIITGC. The FLCV motif motif lies at 228–231; it reads FLCV.

It belongs to the asfivirus A238L family. As to quaternary structure, interacts with host PPIA. Interacts with host PPP3CA/Calcineurin. Interacts with host RELA/p65; interaction of the 32 kDa form with host RELA results in the formation of a stable complex with NF-kappa-B. Interacts with host PPP3R1. Interacts with host EP300; this interaction inhibits the association of host EP300 with host RELA, JUN and NFATC2. Post-translationally, the protein exists in a 28 kDa and a 32 kDa form, probably due to post-translational modifications which are neither phosphorylation, nor sumoylation.

Its subcellular location is the host nucleus. It localises to the host cytoplasm. Functionally, ikB-like protein that inhibits the binding of NF-kappa-B to DNA, thereby downregulating pro-inflammatory cytokine production. Forms a heterodimer with the NF-kappa-B subunit RELA/p65 and prevents the activation of the NF-kappa-B transcription factor. Inhibits calcineurin function, which is required for the induction of nuclear factor of activated T cells (NFAT)-dependent immune response genes. Prevents the binding of substrates to calcineurin without affecting the phosphatase activity. Does not contain the serine residues that are phosphorylated by host IkB kinase and thus is not degraded following stimulation of the NFkB pathway. The polypeptide is IkB-like protein (A238L) (Ornithodoros (relapsing fever ticks)).